The following is a 237-amino-acid chain: Peroxisomal membrane protein 11-1 (237 aa).

Residues 1-92 (MSTLDATRAE…TLVLLGKSKN (92 aa)) are Cytoplasmic-facing. Residues 93–113 (ALLSTFLFLDQFVWLGRTGIY) form a helical membrane-spanning segment. The Lumenal segment spans residues 114–204 (KNKERTDRIV…VGLLQLSPKK (91 aa)). A helical membrane pass occupies residues 205–223 (ITPRVTGAFGFVTSLISCY). Residues 224 to 237 (QQLPSRAPAIKVKA) lie on the Cytoplasmic side of the membrane.

This sequence belongs to the peroxin-11 family. In terms of tissue distribution, expressed in seedlings, leaf sheaths, flag leaf, panicles and spikelets.

The protein resides in the peroxisome membrane. In terms of biological role, involved in peroxisomal proliferation. This is Peroxisomal membrane protein 11-1 (PEX11-1) from Oryza sativa subsp. japonica (Rice).